The following is a 495-amino-acid chain: ATP synthase subunit beta, chloroplastic (495 aa).

Residue Gly172 to Thr179 participates in ATP binding.

Belongs to the ATPase alpha/beta chains family. As to quaternary structure, F-type ATPases have 2 components, CF(1) - the catalytic core - and CF(0) - the membrane proton channel. CF(1) has five subunits: alpha(3), beta(3), gamma(1), delta(1), epsilon(1). CF(0) has four main subunits: a(1), b(1), b'(1) and c(9-12).

The protein localises to the plastid. Its subcellular location is the chloroplast thylakoid membrane. The catalysed reaction is ATP + H2O + 4 H(+)(in) = ADP + phosphate + 5 H(+)(out). Its function is as follows. Produces ATP from ADP in the presence of a proton gradient across the membrane. The catalytic sites are hosted primarily by the beta subunits. The protein is ATP synthase subunit beta, chloroplastic of Eucomis bicolor (King's flower).